A 128-amino-acid polypeptide reads, in one-letter code: MIYVLYSPNCAVCKKVVRFFRNNQIEITKIIIGEDKIERSMLLDILSLCEDGFGTIISFKTESSKRLNITSKTFLDLSTKELLNLIQNDLNLIRRPLIYQTKNNRPYRLQIGYDSEEIEIFKRAVHEK.

A disulfide bridge connects residues C10 and C13.

It belongs to the ArsC family.

This is an uncharacterized protein from Ureaplasma parvum serovar 3 (strain ATCC 700970).